Consider the following 1064-residue polypeptide: Serine protease inhibitor Kazal-type 5 (1064 aa).

The signal sequence occupies residues 1–22; the sequence is MKIATVSVLLPLALCLIQDAAS. The 39-residue stretch at 28–66 folds into the Kazal-like 1; atypical domain; the sequence is EMCHEFQAFMKNGKLFCPQDKKFFQSLDGIMFINKCATC. Intrachain disulfides connect cysteine 30–cysteine 66, cysteine 44–cysteine 63, cysteine 97–cysteine 133, cysteine 111–cysteine 130, cysteine 119–cysteine 151, cysteine 161–cysteine 197, cysteine 175–cysteine 194, cysteine 225–cysteine 261, cysteine 239–cysteine 258, cysteine 297–cysteine 333, cysteine 311–cysteine 330, cysteine 367–cysteine 403, cysteine 381–cysteine 400, cysteine 437–cysteine 473, cysteine 451–cysteine 470, cysteine 496–cysteine 532, cysteine 510–cysteine 529, cysteine 567–cysteine 603, cysteine 581–cysteine 600, cysteine 632–cysteine 668, and cysteine 646–cysteine 665. Kazal-like domains follow at residues 91-153, 155-216, 219-285, 291-352, 361-423, 431-489, 490-551, 561-622, 626-688, 701-757, 768-830, 843-905, 910-971, and 987-1048; these read APTE…ECKS, NPEQ…ETRI, NAEK…KAEE, REIV…ARAR, TSYA…KSRN, ASFE…KAKR, EAAK…EEKG, EAVQ…PRAK, EAEK…EDQR, GNTQ…KNEY, ESGK…EDRS, NDKE…EKSS, NNAK…EKPS, and SLDS…KCEE. Residues 676–688 show a composition bias toward basic and acidic residues; sequence NEERKRKEEEDQR. The disordered stretch occupies residues 676–705; that stretch reads NEERKRKEEEDQRNAAGHGSSGGGGGNTQD. 6 disulfide bridges follow: cysteine 707–cysteine 743, cysteine 721–cysteine 740, cysteine 774–cysteine 810, cysteine 788–cysteine 807, cysteine 849–cysteine 885, and cysteine 863–cysteine 882. The disordered stretch occupies residues 751-775; the sequence is AERKNEYSRSRSNGTGSESGKDTCD. A disordered region spans residues 818-849; sequence AAEKKKKEDEDRSNTGERSNTGERSNDKEDLC. The segment covering 895 to 905 has biased composition (basic and acidic residues); sequence ERKKKDEEKSS. The tract at residues 895 to 915 is disordered; it reads ERKKKDEEKSSSKPSNNAKDE. Intrachain disulfides connect cysteine 916–cysteine 952 and cysteine 930–cysteine 949. Residues 967 to 977 show a composition bias toward basic and acidic residues; the sequence is QEKPSHVRASQ. The disordered stretch occupies residues 967-987; sequence QEKPSHVRASQEEDSPDSFSS. 3 cysteine pairs are disulfide-bonded: cysteine 993-cysteine 1028, cysteine 1006-cysteine 1025, and cysteine 1014-cysteine 1046. A disordered region spans residues 1041–1064; it reads RSTGKCEESSTPGTTAASMPPSDE.

Proteolytically processed by furin in individual domains (D1, D5, D6, D8 through D11, and D9 through D15) exhibiting various inhibitory potentials for multiple proteases. Highly expressed in the thymus and stratum corneum. Also found in the oral mucosa, parathyroid gland, Bartholin's glands, tonsils, and vaginal epithelium. Very low levels are detected in lung, kidney, and prostate.

It is found in the secreted. Functionally, serine protease inhibitor, probably important for the anti-inflammatory and/or antimicrobial protection of mucous epithelia. Contribute to the integrity and protective barrier function of the skin by regulating the activity of defense-activating and desquamation-involved proteases. Inhibits KLK5, it's major target, in a pH-dependent manner. Inhibits KLK7, KLK14 CASP14, and trypsin. This is Serine protease inhibitor Kazal-type 5 (SPINK5) from Homo sapiens (Human).